The primary structure comprises 273 residues: Vacuolar iron transporter (273 aa).

At 1–47 (MGKQKIIDARKAYYEGDIEKSKEIHSHYHNLDKHAEHHSLDKDHLKT) the chain is on the cytoplasmic side. The chain crosses the membrane as a helical span at residues 48–68 (IIFGSLDGIITIFAIVSGCVG). Over 69–72 (ANIT) the chain is Vacuolar. A helical transmembrane segment spans residues 73–93 (PAQVIIIGVGNLFANAISMGF). At 94-181 (SEYTSSTAQI…NEDKSEAFKK (88 aa)) the chain is on the cytoplasmic side. Glu113, Glu116, Glu124, Glu127, Met161, and Glu165 together coordinate Fe cation. Residues 182–202 (GILMFLSFCFFGMIPLFSYVL) form a helical membrane-spanning segment. The Vacuolar portion of the chain corresponds to 203-212 (YNLFFSAENY). A helical transmembrane segment spans residues 213 to 233 (TSSFAVVFISTLITLFILGLF). Residues 234 to 246 (KSQFTTQKPIVCA) lie on the Cytoplasmic side of the membrane. A helical transmembrane segment spans residues 247–267 (LSMVLNGSIAGMLPFLFGVLL). Topologically, residues 268 to 273 (KTNSGD) are vacuolar.

The protein belongs to the CCC1 family. Monomer.

The protein resides in the vacuole membrane. It is found in the endoplasmic reticulum membrane. It catalyses the reaction Fe(2+)(in) = Fe(2+)(out). Its function is as follows. Vacuolar iron transporter involved in the transfer of iron ions from the cytosol to the vacuole for intracellular iron storage. Involved in detoxification of excess iron. The transport mechanism is not well defined and the role of protons is not clear. The sequence is that of Vacuolar iron transporter from Plasmodium berghei (strain Anka).